Consider the following 365-residue polypeptide: tRNA N6-adenosine threonylcarbamoyltransferase (365 aa).

H119 and H123 together coordinate Fe cation. Substrate is bound by residues 141-145, D174, and G187; that span reads LVSGG. The tract at residues 184 to 203 is disordered; that stretch reads QPGGPSVEGEARQGDPKRFR. Basic and acidic residues predominate over residues 192–201; that stretch reads GEARQGDPKR. N289 provides a ligand contact to substrate. Fe cation is bound at residue D317. The interval 342–365 is disordered; it reads ARPRWPLDQSSPAMLGSGKKGAKA.

It belongs to the KAE1 / TsaD family. Fe(2+) is required as a cofactor.

It is found in the cytoplasm. It carries out the reaction L-threonylcarbamoyladenylate + adenosine(37) in tRNA = N(6)-L-threonylcarbamoyladenosine(37) in tRNA + AMP + H(+). Its function is as follows. Required for the formation of a threonylcarbamoyl group on adenosine at position 37 (t(6)A37) in tRNAs that read codons beginning with adenine. Is involved in the transfer of the threonylcarbamoyl moiety of threonylcarbamoyl-AMP (TC-AMP) to the N6 group of A37, together with TsaE and TsaB. TsaD likely plays a direct catalytic role in this reaction. This is tRNA N6-adenosine threonylcarbamoyltransferase from Ruegeria pomeroyi (strain ATCC 700808 / DSM 15171 / DSS-3) (Silicibacter pomeroyi).